The primary structure comprises 229 residues: Uracil-DNA glycosylase (229 aa).

The Proton acceptor role is filled by D64.

It belongs to the uracil-DNA glycosylase (UDG) superfamily. UNG family.

Its subcellular location is the cytoplasm. It catalyses the reaction Hydrolyzes single-stranded DNA or mismatched double-stranded DNA and polynucleotides, releasing free uracil.. Functionally, excises uracil residues from the DNA which can arise as a result of misincorporation of dUMP residues by DNA polymerase or due to deamination of cytosine. The chain is Uracil-DNA glycosylase from Salmonella agona (strain SL483).